Reading from the N-terminus, the 58-residue chain is Conotoxin Leo-T2 (58 aa).

A signal peptide spans 1-22 (MRCLPVFIILPLLIPSAPSVDA). The propeptide occupies 23 to 47 (QPMTEDDVPLASFHEQTLQELWNKR).

It belongs to the conotoxin T superfamily. Post-translationally, contains 2 disulfide bonds that can be either 'C1-C3, C2-C4' or 'C1-C4, C2-C3', since these disulfide connectivities have been observed for conotoxins with cysteine framework V (for examples, see AC P0DQQ7 and AC P81755). In terms of tissue distribution, expressed by the venom duct.

It is found in the secreted. In Conus leopardus (Leopard cone), this protein is Conotoxin Leo-T2.